Reading from the N-terminus, the 392-residue chain is Phosphoglycerate kinase (392 aa).

Substrate contacts are provided by residues 21–23 (DMN), Arg36, 59–62 (HLGR), Arg114, and Arg147. ATP contacts are provided by residues Lys198, Glu320, and 346-349 (GGDT).

Belongs to the phosphoglycerate kinase family. Monomer.

Its subcellular location is the cytoplasm. It carries out the reaction (2R)-3-phosphoglycerate + ATP = (2R)-3-phospho-glyceroyl phosphate + ADP. It functions in the pathway carbohydrate degradation; glycolysis; pyruvate from D-glyceraldehyde 3-phosphate: step 2/5. This is Phosphoglycerate kinase (pgk) from Neisseria meningitidis serogroup B (strain ATCC BAA-335 / MC58).